The chain runs to 138 residues: Basic phospholipase A2 PLA-N (138 aa).

The first 16 residues, 1-16 (MRTLWIMAVLLVGVEG), serve as a signal peptide directing secretion. 7 cysteine pairs are disulfide-bonded: Cys42–Cys131, Cys44–Cys60, Cys59–Cys111, Cys65–Cys138, Cys66–Cys104, Cys73–Cys97, and Cys91–Cys102. Ca(2+)-binding residues include Tyr43, Gly45, and Gly47. His63 is an active-site residue. Asp64 contacts Ca(2+). Asp105 is a catalytic residue.

Belongs to the phospholipase A2 family. Group II subfamily. D49 sub-subfamily. It depends on Ca(2+) as a cofactor. As to expression, expressed by the venom gland.

The protein localises to the secreted. The catalysed reaction is a 1,2-diacyl-sn-glycero-3-phosphocholine + H2O = a 1-acyl-sn-glycero-3-phosphocholine + a fatty acid + H(+). Functionally, snake venom phospholipase A2 (PLA2) that displays edema-inducing activities, as well as presynaptic neurotoxicity and myotoxicity. PLA2 catalyzes the calcium-dependent hydrolysis of the 2-acyl groups in 3-sn-phosphoglycerides. This Protobothrops flavoviridis (Habu) protein is Basic phospholipase A2 PLA-N.